A 219-amino-acid chain; its full sequence is 7-cyano-7-deazaguanine synthase (219 aa).

Residue leucine 8–leucine 18 coordinates ATP. 4 residues coordinate Zn(2+): cysteine 185, cysteine 193, cysteine 196, and cysteine 199.

The protein belongs to the QueC family. The cofactor is Zn(2+).

It catalyses the reaction 7-carboxy-7-deazaguanine + NH4(+) + ATP = 7-cyano-7-deazaguanine + ADP + phosphate + H2O + H(+). It participates in purine metabolism; 7-cyano-7-deazaguanine biosynthesis. Catalyzes the ATP-dependent conversion of 7-carboxy-7-deazaguanine (CDG) to 7-cyano-7-deazaguanine (preQ(0)). The polypeptide is 7-cyano-7-deazaguanine synthase (Desulfotalea psychrophila (strain LSv54 / DSM 12343)).